We begin with the raw amino-acid sequence, 224 residues long: Small ribosomal subunit protein uS3 (224 aa).

Positions 20–89 (LDEFLANYFK…NVNITVSPVP (70 aa)) constitute a KH type-2 domain.

It belongs to the universal ribosomal protein uS3 family. In terms of assembly, part of the 30S ribosomal subunit.

Binds the lower part of the 30S subunit head. This is Small ribosomal subunit protein uS3 from Staphylothermus marinus (strain ATCC 43588 / DSM 3639 / JCM 9404 / F1).